Here is a 265-residue protein sequence, read N- to C-terminus: Thiazole synthase (265 aa).

The Schiff-base intermediate with DXP role is filled by K107. 1-deoxy-D-xylulose 5-phosphate contacts are provided by residues G168, 194 to 195 (AG), and 216 to 217 (NT).

It belongs to the ThiG family. In terms of assembly, homotetramer. Forms heterodimers with either ThiH or ThiS.

It is found in the cytoplasm. It carries out the reaction [ThiS sulfur-carrier protein]-C-terminal-Gly-aminoethanethioate + 2-iminoacetate + 1-deoxy-D-xylulose 5-phosphate = [ThiS sulfur-carrier protein]-C-terminal Gly-Gly + 2-[(2R,5Z)-2-carboxy-4-methylthiazol-5(2H)-ylidene]ethyl phosphate + 2 H2O + H(+). Its pathway is cofactor biosynthesis; thiamine diphosphate biosynthesis. Catalyzes the rearrangement of 1-deoxy-D-xylulose 5-phosphate (DXP) to produce the thiazole phosphate moiety of thiamine. Sulfur is provided by the thiocarboxylate moiety of the carrier protein ThiS. In vitro, sulfur can be provided by H(2)S. This is Thiazole synthase from Pseudomonas paraeruginosa (strain DSM 24068 / PA7) (Pseudomonas aeruginosa (strain PA7)).